A 57-amino-acid polypeptide reads, in one-letter code: DNA-directed RNA polymerase subunit Rpo6 (57 aa).

This sequence belongs to the archaeal Rpo6/eukaryotic RPB6 RNA polymerase subunit family. Part of the RNA polymerase complex.

The protein resides in the cytoplasm. The enzyme catalyses RNA(n) + a ribonucleoside 5'-triphosphate = RNA(n+1) + diphosphate. In terms of biological role, DNA-dependent RNA polymerase (RNAP) catalyzes the transcription of DNA into RNA using the four ribonucleoside triphosphates as substrates. The polypeptide is DNA-directed RNA polymerase subunit Rpo6 (Pyrococcus furiosus (strain ATCC 43587 / DSM 3638 / JCM 8422 / Vc1)).